Here is a 418-residue protein sequence, read N- to C-terminus: Glutamyl-tRNA reductase (418 aa).

Substrate-binding positions include 49–52 (TCNR), Ser109, 114–116 (EPQ), and Gln120. Cys50 acts as the Nucleophile in catalysis. 189–194 (GAGETI) is a binding site for NADP(+).

It belongs to the glutamyl-tRNA reductase family. Homodimer.

The enzyme catalyses (S)-4-amino-5-oxopentanoate + tRNA(Glu) + NADP(+) = L-glutamyl-tRNA(Glu) + NADPH + H(+). Its pathway is porphyrin-containing compound metabolism; protoporphyrin-IX biosynthesis; 5-aminolevulinate from L-glutamyl-tRNA(Glu): step 1/2. Catalyzes the NADPH-dependent reduction of glutamyl-tRNA(Glu) to glutamate 1-semialdehyde (GSA). The protein is Glutamyl-tRNA reductase of Escherichia coli O7:K1 (strain IAI39 / ExPEC).